Here is a 141-residue protein sequence, read N- to C-terminus: Hemoglobin subunit alpha (141 aa).

One can recognise a Globin domain in the interval 1–141 (VLSPADKTNV…VSTVLTSKYR (141 aa)). Ser-3 is modified (phosphoserine). An N6-succinyllysine modification is found at Lys-7. A Phosphothreonine modification is found at Thr-8. The residue at position 11 (Lys-11) is an N6-succinyllysine. Residue Lys-16 is modified to N6-acetyllysine; alternate. Residue Lys-16 is modified to N6-succinyllysine; alternate. Tyr-24 carries the post-translational modification Phosphotyrosine. Ser-35 is modified (phosphoserine). Lys-40 carries the N6-succinyllysine modification. Residue His-58 coordinates O2. A heme b-binding site is contributed by His-87. Ser-102 carries the phosphoserine modification. Thr-108 bears the Phosphothreonine mark. A phosphoserine mark is found at Ser-124 and Ser-131. Thr-134 and Thr-137 each carry phosphothreonine. Residue Ser-138 is modified to Phosphoserine.

It belongs to the globin family. In terms of assembly, heterotetramer of two alpha chains and two beta chains. Red blood cells.

In terms of biological role, involved in oxygen transport from the lung to the various peripheral tissues. Its function is as follows. Hemopressin acts as an antagonist peptide of the cannabinoid receptor CNR1. Hemopressin-binding efficiently blocks cannabinoid receptor CNR1 and subsequent signaling. The protein is Hemoglobin subunit alpha (HBA) of Cynopterus sphinx (Indian short-nosed fruit bat).